Consider the following 368-residue polypeptide: Isopentenyl-diphosphate delta-isomerase (368 aa).

Position 7-8 (7-8 (RK)) interacts with substrate. FMN-binding positions include threonine 65, 66–68 (GMT), serine 96, and asparagine 125. Residue 96–98 (SQR) participates in substrate binding. A substrate-binding site is contributed by glutamine 160. Glutamate 161 lines the Mg(2+) pocket. FMN is bound by residues lysine 193, serine 218, threonine 223, 275–277 (GIR), and 296–297 (AL).

This sequence belongs to the IPP isomerase type 2 family. In terms of assembly, homooctamer. Dimer of tetramers. It depends on FMN as a cofactor. NADPH serves as cofactor. Mg(2+) is required as a cofactor.

It is found in the cytoplasm. It catalyses the reaction isopentenyl diphosphate = dimethylallyl diphosphate. Involved in the biosynthesis of isoprenoids. Catalyzes the 1,3-allylic rearrangement of the homoallylic substrate isopentenyl (IPP) to its allylic isomer, dimethylallyl diphosphate (DMAPP). The protein is Isopentenyl-diphosphate delta-isomerase of Saccharolobus solfataricus (strain ATCC 35092 / DSM 1617 / JCM 11322 / P2) (Sulfolobus solfataricus).